The chain runs to 142 residues: uncharacterized protein (142 aa).

N-linked (GlcNAc...) asparagine; by host glycosylation is found at N29 and N67. The helical transmembrane segment at 88–108 threads the bilayer; the sequence is VFYLGYPVIFIIGVTYFSIIA.

It localises to the membrane. This is an uncharacterized protein from Acanthamoeba polyphaga mimivirus (APMV).